The sequence spans 481 residues: MKNLKMVFFKILFISLMAGLAMKGSKINVEDLQKFSLHHTQNNLQTISLLLFLVVFVWILYMLTRPKPVYLVDFSCYLPPSHLKVSIQTLMGHARRAREAGMCWKNKESDHLVDFQEKILERSGLGQETYIPEGLQCFPLQQGMGASRKETEEVIFGALDNLFRNTGVKPDDIGILVVNSSTFNPTPSLASMIVNKYKLRDNIKSLNLGGMGCSAGVIAVDVAKGLLQVHRNTYAIVVSTENITQNLYLGKNKSMLVTNCLFRVGGAAVLLSNRSRDRNRAKYELVHTVRIHTGSDDRSFECATQEEDEDGIIGVTLTKNLPMVAARTLKINIATLGPLVLPLKEKLAFFITFVKKKYFKPELRNYTPDFKLAFEHFCIHAGGRALIDELEKNLKLSPLHVEASRMTLHRFGNTSSSSIWYELAYTEAKGRMKEGDRIWQIALGSGFKCNSSVWVALRDVKPSANSPWEDCMDRYPVEIDI.

A run of 2 helical transmembrane segments spans residues Leu4 to Gly24 and Leu44 to Thr64. Positions Tyr61 to Tyr358 constitute an FAE domain. Active-site residues include Cys213, His292, His376, His380, His409, and Asn413.

It belongs to the thiolase-like superfamily. Chalcone/stilbene synthases family. As to expression, expressed in leaves and seedlings.

It localises to the endoplasmic reticulum membrane. The enzyme catalyses a very-long-chain acyl-CoA + malonyl-CoA + H(+) = a very-long-chain 3-oxoacyl-CoA + CO2 + CoA. Its pathway is lipid metabolism; fatty acid biosynthesis. The protein is 3-ketoacyl-CoA synthase 8 of Arabidopsis thaliana (Mouse-ear cress).